Consider the following 839-residue polypeptide: DNA-directed RNA polymerase YonO (839 aa).

3 residues coordinate Mg(2+): aspartate 535, aspartate 537, and aspartate 539.

Belongs to the YRH RNA polymerase family. The cofactor is a divalent metal cation.

It carries out the reaction RNA(n) + a ribonucleoside 5'-triphosphate = RNA(n+1) + diphosphate. Its function is as follows. A single subunit DNA-dependent RNA polymerase (RNAP) that catalyzes the transcription of DNA into RNA using the four ribonucleoside triphosphates (rNTPs) as substrates. The enzyme is more highly processive than the multisubunit RNAP from E.coli but is considerably more error-prone. It has no detectable proof-reading function but can perform pyrophosphorolysis. Probably transcribes the late genes of the SPbeta phage starting from yonK. This is DNA-directed RNA polymerase YonO (yonO) from Bacillus pumilus (Bacillus mesentericus).